A 280-amino-acid chain; its full sequence is Borealin (280 aa).

The span at Lys140 to Arg153 shows a compositional bias: basic residues. The disordered stretch occupies residues Lys140–Tyr187.

This sequence belongs to the borealin family. Component of the CPC at least composed of survivin/birc5, incenp, cdca8/borealin and/or cdca9/dasra-A, and aurkb/aurora-B. Interacts with incenp (via N-terminus).

The protein resides in the nucleus. Its subcellular location is the chromosome. The protein localises to the centromere. It is found in the cytoplasm. It localises to the cytoskeleton. The protein resides in the spindle. Its function is as follows. Component of the chromosomal passenger complex (CPC), a complex that acts as a key regulator of mitosis. The CPC complex has essential functions at the centromere in ensuring correct chromosome alignment and segregation and is required for chromatin-induced microtubule stabilization and spindle assembly. Contributes to CPC function by facilitating loading of the CPC onto chromosomes. This is Borealin (cdca8) from Xenopus laevis (African clawed frog).